The following is a 727-amino-acid chain: Protein EXECUTER 1, chloroplastic (727 aa).

4 disordered regions span residues 1–51, 65–102, 340–381, and 413–455; these read MAAA…SRLF, LAGA…AGSG, ISSS…LPSD, and DEDD…SGDE. The N-terminal 83 residues, 1–83, are a transit peptide targeting the chloroplast; sequence MAAAVSTAPR…PRRRVSSVVR (83 aa). Composition is skewed to low complexity over residues 19–33 and 42–51; these read SSSC…ASMS and PSSGSGSRLF. The segment covering 413 to 441 has biased composition (acidic residues); sequence DEDDENDNPEDEIESSEDIGDGDNVEEAE.

The protein resides in the plastid. It localises to the chloroplast. Together with EX2, enables higher plants to perceive singlet oxygen as a stress signal in plastid that activates a genetically determined nuclear stress response program which triggers a programmed cell death (PCD). This transfer of singlet oxygen-induced stress-related signals from the plastid to the nucleus that triggers genetically controlled PCD pathway is unique to photosynthetic eukaryotes and operates under mild stress conditions, impeding photosystem II (PSII) without causing photooxidative damage of the plant. This Oryza sativa subsp. japonica (Rice) protein is Protein EXECUTER 1, chloroplastic.